A 268-amino-acid chain; its full sequence is Tryptophan synthase alpha chain (268 aa).

Residues glutamate 49 and aspartate 60 each act as proton acceptor in the active site.

The protein belongs to the TrpA family. In terms of assembly, tetramer of two alpha and two beta chains.

The catalysed reaction is (1S,2R)-1-C-(indol-3-yl)glycerol 3-phosphate + L-serine = D-glyceraldehyde 3-phosphate + L-tryptophan + H2O. It functions in the pathway amino-acid biosynthesis; L-tryptophan biosynthesis; L-tryptophan from chorismate: step 5/5. The alpha subunit is responsible for the aldol cleavage of indoleglycerol phosphate to indole and glyceraldehyde 3-phosphate. This is Tryptophan synthase alpha chain from Yersinia pseudotuberculosis serotype O:1b (strain IP 31758).